The primary structure comprises 316 residues: UPF0613 protein PB24D3.06c (316 aa).

The protein belongs to the UPF0613 family.

The protein localises to the cytoplasm. It localises to the nucleus. The chain is UPF0613 protein PB24D3.06c from Schizosaccharomyces pombe (strain 972 / ATCC 24843) (Fission yeast).